Consider the following 359-residue polypeptide: Putative nucleotidyltransferase MAB21L1 (359 aa).

Residues 23 to 24 (RK) and 63 to 66 (YEGL) each bind a ribonucleoside 5'-triphosphate. Mg(2+)-binding residues include Glu-73 and Glu-75. A ribonucleoside 5'-triphosphate-binding positions include Lys-248 and 252 to 255 (SLLK).

Belongs to the mab-21 family. In terms of assembly, monomer. Homodecamer; composed of 2 back to back homopentamers. The protein may exist as monomer in solution and oiligomerizes upon ligand binding.

The protein localises to the nucleus. In terms of biological role, putative nucleotidyltransferase required for several aspects of embryonic development including normal development of the eye. It is unclear whether it displays nucleotidyltransferase activity in vivo. Binds single-stranded RNA (ssRNA). This is Putative nucleotidyltransferase MAB21L1 (mab21l1) from Xenopus laevis (African clawed frog).